Here is a 739-residue protein sequence, read N- to C-terminus: Exocyst complex component 3-like protein (739 aa).

Positions 1–370 are mediates interaction with EXOC2, EXOC4 and EXOC5; sequence MDSAARDKTQ…DVSDLEPLLT (370 aa).

The protein belongs to the SEC6 family. Interacts with EXOC2, EXOC4 and EXOC5; may be part of the exocyst.

It localises to the cytoplasmic vesicle. Its subcellular location is the secretory vesicle. Its function is as follows. As part of the exocyst, may play a role in regulated exocytosis of insulin granules. The chain is Exocyst complex component 3-like protein (EXOC3L1) from Bos taurus (Bovine).